A 637-amino-acid chain; its full sequence is Chaperone protein HtpG (637 aa).

The tract at residues 1 to 345 (MTAAQKETLG…SNDLPLNVSR (345 aa)) is a; substrate-binding. Positions 346–562 (EILQDNKVTQ…DNDMSSQMQK (217 aa)) are b. The tract at residues 563 to 637 (LMESVGQAAP…LNKLMLELSK (75 aa)) is c.

Belongs to the heat shock protein 90 family. As to quaternary structure, homodimer.

The protein localises to the cytoplasm. In terms of biological role, molecular chaperone. Has ATPase activity. The polypeptide is Chaperone protein HtpG (Pseudoalteromonas translucida (strain TAC 125)).